We begin with the raw amino-acid sequence, 486 residues long: UDP-N-acetylmuramoyl-L-alanyl-D-glutamate--2,6-diaminopimelate ligase (486 aa).

S34 provides a ligand contact to UDP-N-acetyl-alpha-D-muramoyl-L-alanyl-D-glutamate. Residue 112–118 participates in ATP binding; the sequence is GTAGKTS. UDP-N-acetyl-alpha-D-muramoyl-L-alanyl-D-glutamate contacts are provided by residues 154–155, S181, Q187, and R189; that span reads TT. K221 is subject to N6-carboxylysine. Residues R385, 409-412, G457, and E461 contribute to the meso-2,6-diaminopimelate site; that span reads DNPR. Positions 409–412 match the Meso-diaminopimelate recognition motif motif; sequence DNPR.

It belongs to the MurCDEF family. MurE subfamily. Mg(2+) serves as cofactor. Carboxylation is probably crucial for Mg(2+) binding and, consequently, for the gamma-phosphate positioning of ATP.

It is found in the cytoplasm. It catalyses the reaction UDP-N-acetyl-alpha-D-muramoyl-L-alanyl-D-glutamate + meso-2,6-diaminopimelate + ATP = UDP-N-acetyl-alpha-D-muramoyl-L-alanyl-gamma-D-glutamyl-meso-2,6-diaminopimelate + ADP + phosphate + H(+). The protein operates within cell wall biogenesis; peptidoglycan biosynthesis. Catalyzes the addition of meso-diaminopimelic acid to the nucleotide precursor UDP-N-acetylmuramoyl-L-alanyl-D-glutamate (UMAG) in the biosynthesis of bacterial cell-wall peptidoglycan. In Rhizobium meliloti (strain 1021) (Ensifer meliloti), this protein is UDP-N-acetylmuramoyl-L-alanyl-D-glutamate--2,6-diaminopimelate ligase.